The following is a 209-amino-acid chain: Small ribosomal subunit protein uS4 (209 aa).

Residues arginine 98 to aspartate 159 form the S4 RNA-binding domain.

It belongs to the universal ribosomal protein uS4 family. Part of the 30S ribosomal subunit. Contacts protein S5. The interaction surface between S4 and S5 is involved in control of translational fidelity.

One of the primary rRNA binding proteins, it binds directly to 16S rRNA where it nucleates assembly of the body of the 30S subunit. Functionally, with S5 and S12 plays an important role in translational accuracy. This Syntrophotalea carbinolica (strain DSM 2380 / NBRC 103641 / GraBd1) (Pelobacter carbinolicus) protein is Small ribosomal subunit protein uS4.